Here is a 521-residue protein sequence, read N- to C-terminus: NAD(P)H-quinone oxidoreductase subunit 2 (521 aa).

Helical transmembrane passes span 15–35 (ILPE…DITF), 42–62 (WTPY…YTQW), 79–99 (LSIV…LMSV), 109–126 (IGEF…AMFL), 131–153 (ELVM…TGYM), 167–187 (LLIG…LYGL), 208–228 (LALV…IAAV), 242–262 (PTPV…ALAI), 276–296 (WQFI…VVAI), 304–324 (MLAY…VIGT), 332–352 (VFYL…VILF), 376–396 (LALS…GFFG), 398–418 (LYLF…LGLI), and 464–484 (VGLV…NPLL).

Belongs to the complex I subunit 2 family. As to quaternary structure, NDH-1 can be composed of about 15 different subunits; different subcomplexes with different compositions have been identified which probably have different functions.

Its subcellular location is the cellular thylakoid membrane. It catalyses the reaction a plastoquinone + NADH + (n+1) H(+)(in) = a plastoquinol + NAD(+) + n H(+)(out). It carries out the reaction a plastoquinone + NADPH + (n+1) H(+)(in) = a plastoquinol + NADP(+) + n H(+)(out). Its function is as follows. NDH-1 shuttles electrons from an unknown electron donor, via FMN and iron-sulfur (Fe-S) centers, to quinones in the respiratory and/or the photosynthetic chain. The immediate electron acceptor for the enzyme in this species is believed to be plastoquinone. Couples the redox reaction to proton translocation, and thus conserves the redox energy in a proton gradient. Cyanobacterial NDH-1 also plays a role in inorganic carbon-concentration. This chain is NAD(P)H-quinone oxidoreductase subunit 2, found in Acaryochloris marina (strain MBIC 11017).